A 378-amino-acid polypeptide reads, in one-letter code: Ribosomal RNA large subunit methyltransferase G (378 aa).

It belongs to the methyltransferase superfamily. RlmG family.

Its subcellular location is the cytoplasm. It catalyses the reaction guanosine(1835) in 23S rRNA + S-adenosyl-L-methionine = N(2)-methylguanosine(1835) in 23S rRNA + S-adenosyl-L-homocysteine + H(+). Its function is as follows. Specifically methylates the guanine in position 1835 (m2G1835) of 23S rRNA. This chain is Ribosomal RNA large subunit methyltransferase G, found in Shewanella sp. (strain W3-18-1).